The following is a 404-amino-acid chain: Argininosuccinate synthase (404 aa).

Residues 13–21 (AYSGGLDTS) and Ala41 contribute to the ATP site. L-citrulline-binding residues include Tyr93 and Ser98. Position 123 (Gly123) interacts with ATP. L-aspartate-binding residues include Thr125, Asn129, and Asp130. Position 129 (Asn129) interacts with L-citrulline. Residues Arg133, Ser182, Ser191, Glu267, and Tyr279 each contribute to the L-citrulline site.

It belongs to the argininosuccinate synthase family. Type 1 subfamily. As to quaternary structure, homotetramer.

It localises to the cytoplasm. The catalysed reaction is L-citrulline + L-aspartate + ATP = 2-(N(omega)-L-arginino)succinate + AMP + diphosphate + H(+). It participates in amino-acid biosynthesis; L-arginine biosynthesis; L-arginine from L-ornithine and carbamoyl phosphate: step 2/3. The sequence is that of Argininosuccinate synthase from Moritella profunda.